A 339-amino-acid polypeptide reads, in one-letter code: 5-dehydro-2-deoxygluconokinase (339 aa).

Belongs to the carbohydrate kinase PfkB family.

It catalyses the reaction 5-dehydro-2-deoxy-D-gluconate + ATP = 6-phospho-5-dehydro-2-deoxy-D-gluconate + ADP + H(+). It functions in the pathway polyol metabolism; myo-inositol degradation into acetyl-CoA; acetyl-CoA from myo-inositol: step 5/7. Its function is as follows. Catalyzes the phosphorylation of 5-dehydro-2-deoxy-D-gluconate (2-deoxy-5-keto-D-gluconate or DKG) to 6-phospho-5-dehydro-2-deoxy-D-gluconate (DKGP). In Clostridium beijerinckii (strain ATCC 51743 / NCIMB 8052) (Clostridium acetobutylicum), this protein is 5-dehydro-2-deoxygluconokinase.